Here is a 537-residue protein sequence, read N- to C-terminus: Tyrosine-protein kinase fyna (537 aa).

Gly-2 carries N-myristoyl glycine lipidation. S-palmitoyl cysteine attachment occurs at residues Cys-3 and Cys-6. Thr-12 carries the post-translational modification Phosphothreonine; by PKC. The tract at residues 13–34 is disordered; sequence KLTDERETSVSQHAGYRYGSDP. The SH3 domain occupies 82–143; the sequence is TGVTLFVALY…PSNYVAPVDS (62 aa). The region spanning 149 to 246 is the SH2 domain; it reads WYFGKLGRKD…GLCCRLIVPC (98 aa). The Protein kinase domain occupies 271–524; it reads LQLIKRLGNG…YLQAFLEDYF (254 aa). Residues 277-285 and Lys-299 each bind ATP; that span reads LGNGQFGEV. Residue Asp-390 is the Proton acceptor of the active site. Residue Tyr-420 is modified to Phosphotyrosine; by autocatalysis. Position 531 is a phosphotyrosine (Tyr-531).

The protein belongs to the protein kinase superfamily. Tyr protein kinase family. SRC subfamily. It depends on Mn(2+) as a cofactor. As to expression, widely expressed.

Its subcellular location is the cytoplasm. The protein localises to the nucleus. It carries out the reaction L-tyrosyl-[protein] + ATP = O-phospho-L-tyrosyl-[protein] + ADP + H(+). Its activity is regulated as follows. Inhibited by phosphorylation of Tyr-531 by leukocyte common antigen and activated by dephosphorylation of this site. Relatively inactive in the unfertilized oocyte, undergoes rapid activation immediately following fertilization. Total activity increases progressively during later development and remains elevated during sphere and epiboly stage. Its function is as follows. Tyrosine-protein kinase implicated in the control of cell growth. Plays a role in the regulation of intracellular calcium levels. Required in brain development and mature brain function with important roles in the regulation of axon growth, axon guidance, and neurite extension. Role in cntn1-mediated signaling. Required for convergent extension cell movements during gastrulation, acting with yes via rhoa. May be required for epiboly to occur, possibly through its effects in calcium signaling. In Danio rerio (Zebrafish), this protein is Tyrosine-protein kinase fyna (fyna).